Reading from the N-terminus, the 494-residue chain is Glutamyl-tRNA(Gln) amidotransferase subunit A (494 aa).

Active-site charge relay system residues include Lys-80 and Ser-155. Residue Ser-179 is the Acyl-ester intermediate of the active site.

The protein belongs to the amidase family. GatA subfamily. In terms of assembly, heterotrimer of A, B and C subunits.

The enzyme catalyses L-glutamyl-tRNA(Gln) + L-glutamine + ATP + H2O = L-glutaminyl-tRNA(Gln) + L-glutamate + ADP + phosphate + H(+). In terms of biological role, allows the formation of correctly charged Gln-tRNA(Gln) through the transamidation of misacylated Glu-tRNA(Gln) in organisms which lack glutaminyl-tRNA synthetase. The reaction takes place in the presence of glutamine and ATP through an activated gamma-phospho-Glu-tRNA(Gln). This chain is Glutamyl-tRNA(Gln) amidotransferase subunit A, found in Lachnoclostridium phytofermentans (strain ATCC 700394 / DSM 18823 / ISDg) (Clostridium phytofermentans).